The sequence spans 151 residues: Ribosome maturation factor RimP (151 aa).

Belongs to the RimP family.

It is found in the cytoplasm. Functionally, required for maturation of 30S ribosomal subunits. The protein is Ribosome maturation factor RimP of Halorhodospira halophila (strain DSM 244 / SL1) (Ectothiorhodospira halophila (strain DSM 244 / SL1)).